Here is a 190-residue protein sequence, read N- to C-terminus: Interferon alpha-7 (190 aa).

The N-terminal stretch at 1-23 (MARLCAFLMVLAVMSYWPTCCLG) is a signal peptide. Cystine bridges form between Cys24–Cys122 and Cys52–Cys162. Asn101 carries N-linked (GlcNAc...) asparagine glycosylation.

The protein belongs to the alpha/beta interferon family.

The protein localises to the secreted. Produced by macrophages, IFN-alpha have antiviral activities. Interferon stimulates the production of two enzymes: a protein kinase and an oligoadenylate synthetase. This is Interferon alpha-7 (Ifna7) from Mus musculus (Mouse).